The sequence spans 159 residues: Abscisic acid and environmental stress-inducible protein (159 aa).

6 tandem repeats follow at residues 38–49 (GGGYNHGGGGYN), 50–61 (GGGYNHGGGGYN), 63–74 (GGGYNHGGGGYN), 77–88 (GGGYNHGGGGYN), 91–102 (GGGYNHGGGGYN), and 105–116 (GGGYNHGGGGYN). The segment at 38 to 135 (GGGYNHGGGG…GYNHGGGGCQ (98 aa)) is 7 X 12 AA repeats of G-G-G-Y-N-H-G-G-G-Y-N. The stretch at 124-135 (GGGYNHGGGGCQ) is one 7; approximate repeat.

Belongs to the GRP family.

In Medicago sativa subsp. falcata (Sickle medic), this protein is Abscisic acid and environmental stress-inducible protein.